The following is a 156-amino-acid chain: ATP synthase subunit b (156 aa).

Residues 7–27 (LIGQLIAFAIFVAFCMKFVWP) traverse the membrane as a helical segment.

Belongs to the ATPase B chain family. In terms of assembly, F-type ATPases have 2 components, F(1) - the catalytic core - and F(0) - the membrane proton channel. F(1) has five subunits: alpha(3), beta(3), gamma(1), delta(1), epsilon(1). F(0) has three main subunits: a(1), b(2) and c(10-14). The alpha and beta chains form an alternating ring which encloses part of the gamma chain. F(1) is attached to F(0) by a central stalk formed by the gamma and epsilon chains, while a peripheral stalk is formed by the delta and b chains.

The protein resides in the cell inner membrane. F(1)F(0) ATP synthase produces ATP from ADP in the presence of a proton or sodium gradient. F-type ATPases consist of two structural domains, F(1) containing the extramembraneous catalytic core and F(0) containing the membrane proton channel, linked together by a central stalk and a peripheral stalk. During catalysis, ATP synthesis in the catalytic domain of F(1) is coupled via a rotary mechanism of the central stalk subunits to proton translocation. Functionally, component of the F(0) channel, it forms part of the peripheral stalk, linking F(1) to F(0). The chain is ATP synthase subunit b from Pasteurella multocida (strain Pm70).